A 1776-amino-acid polypeptide reads, in one-letter code: 6-methylsalicylic acid synthase (1776 aa).

Residues 1 to 18 show a composition bias toward low complexity; sequence MHSVSPSTYPSGGTSPAP. A disordered region spans residues 1–26; it reads MHSVSPSTYPSGGTSPAPADTPGTEY. The region spanning 32–457 is the Ketosynthase family 3 (KS3) domain; the sequence is SNDVAVVGMA…GTVSHAVIEE (426 aa). Active-site for beta-ketoacyl synthase activity residues include Cys204, His339, and His379. The segment at 567 to 880 is malonyl-CoA:ACP transacylase (MAT) domain; that stretch reads VWVFSGHGAQ…IAQLHCRGAE (314 aa). The tract at residues 925–1044 is N-terminal hotdog fold; sequence HTLLGQRIPV…AYWDRKVLGS (120 aa). Residues 925–1196 are dehydratase (DH) domain; that stretch reads HTLLGQRIPV…FTAMRFSEIE (272 aa). Residues 925-1201 form the PKS/mFAS DH domain; that stretch reads HTLLGQRIPV…FSEIEGTPGV (277 aa). His957 serves as the catalytic Proton acceptor; for dehydratase activity. The interval 1058–1201 is C-terminal hotdog fold; it reads TTKLADNFSI…FSEIEGTPGV (144 aa). Asp1113 acts as the Proton donor; for dehydratase activity in catalysis. A product template (PT) domain region spans residues 1205–1657; the sequence is MESLVHQIAW…LRSLAIDDGE (453 aa). Residues 1700–1774 form the Carrier domain; sequence AYLDEKIRGC…HLVVWFAEKI (75 aa). O-(pantetheine 4'-phosphoryl)serine is present on Ser1734.

Its subcellular location is the cytoplasm. It is found in the cytosol. It catalyses the reaction 3 malonyl-CoA + acetyl-CoA + NADPH + 3 H(+) = 6-methylsalicylate + 3 CO2 + NADP(+) + 4 CoA + H2O. The protein operates within mycotoxin biosynthesis; patulin biosynthesis. 6-methylsalicylic acid synthase; part of the gene cluster that mediates the biosynthesis of patulin, an acetate-derived tetraketide mycotoxin produced by several fungal species that shows antimicrobial properties against several bacteria. PatK catalyzes the first step of the pathway which is the synthesis of 6-methylsalicylic acid via condensation of 1 acetate and 3 malonate units. The pathway begins with the synthesis of 6-methylsalicylic acid by the polyketide synthase (PKS) patK via condensation of acetate and malonate units. The 6-methylsalicylic acid decarboxylase patG then catalyzes the decarboxylation of 6-methylsalicylic acid to yield m-cresol (also known as 3-methylphenol). These first reactions occur in the cytosol. The intermediate m-cresol is then transported into the endoplasmic reticulum where the cytochrome P450 monooxygenase patH converts it to m-hydroxybenzyl alcohol, which is further converted to gentisyl alcohol by the cytochrome P450 monooxygenase patI. The oxidoreductases patJ and patO further convert gentisyl alcohol to isoepoxydon in the vacuole. PatN catalyzes then the transformation of isoepoxydon into phyllostine. The cluster protein patF is responsible for the conversion from phyllostine to neopatulin whereas the alcohol dehydrogenase patD converts neopatulin to E-ascladiol. The steps between isoepoxydon and E-ascladiol occur in the cytosol, and E-ascladiol is probably secreted to the extracellular space by one of the cluster-specific transporters patC or patM. Finally, the secreted patulin synthase patE catalyzes the conversion of E-ascladiol to patulin. The protein is 6-methylsalicylic acid synthase of Penicillium expansum (Blue mold rot fungus).